The chain runs to 400 residues: Putative niacin/nicotinamide transporter NiaP (400 aa).

Residues 1–14 (MGKQQPISQRKLLG) lie on the Cytoplasmic side of the membrane. Residues 15 to 35 (VAGLGWLFDAMDVGILSFIIA) traverse the membrane as a helical segment. Residues 36 to 49 (ALHVEWNLSPEEMK) are Extracellular-facing. Residues 50-70 (WIGSVNSIGMAAGAFLFGLLA) form a helical membrane-spanning segment. The Cytoplasmic segment spans residues 71–77 (DRIGRKK). 2 helical membrane passes run 78 to 98 (VFIITLLCFSIGSGISAFVTS) and 99 to 119 (LSAFLILRFVIGMGLGGELPV). The Cytoplasmic segment spans residues 120 to 142 (ASTLVSEAVVPEKRGRVIVLLES). The chain crosses the membrane as a helical span at residues 143-163 (FWAVGWLAAALISYFVIPSFG). Residues 164–165 (WQ) lie on the Extracellular side of the membrane. Residues 166–186 (AALLLTALTAFYALYLRTSLP) traverse the membrane as a helical segment. Residues 187–217 (DSPKYESLSAKKRSMWENVKSVWARQYIRPT) lie on the Cytoplasmic side of the membrane. The helical transmembrane segment at 218 to 238 (VMLSIVWFCVVFSYYGMFLWL) threads the bilayer. Topologically, residues 239–253 (PSVMLLKGFSMIQSF) are extracellular. A helical transmembrane segment spans residues 254–274 (EYVLLMTLAQLPGYFSAAWLI). At 275-280 (EKAGRK) the chain is on the cytoplasmic side. Residues 281-301 (WILVVYLIGTAGSAYFFGTAD) form a helical membrane-spanning segment. Residues 302-304 (SLS) are Extracellular-facing. A helical membrane pass occupies residues 305 to 325 (LLLTAGVLLSFFNLGAWGVLY). Topologically, residues 326–343 (AYTPEQYPTAIRATGSGT) are cytoplasmic. Residues 344–364 (TAAFGRIGGIFGPLLVGTLAA) form a helical membrane-spanning segment. At 365-370 (RHISFS) the chain is on the extracellular side. Residues 371–391 (VIFSIFCIAILLAVACILIMG) form a helical membrane-spanning segment. The Cytoplasmic portion of the chain corresponds to 392–400 (KETKQTELE).

It belongs to the major facilitator superfamily. Sugar transporter (TC 2.A.1.1) family.

Its subcellular location is the cell membrane. Its function is as follows. Probably involved in the uptake of amidated and deamidated forms of niacin. Increases the growth rate of E.coli that is unable to make niacin de novo; confers increased sensitivity to the toxic niacin analog 6-amino-nicotinamide to wild-type E.coli. There is probably another mechanism for niacin uptake. The polypeptide is Putative niacin/nicotinamide transporter NiaP (Bacillus subtilis (strain 168)).